The primary structure comprises 458 residues: Exodeoxyribonuclease 7 large subunit (458 aa).

The protein belongs to the XseA family. In terms of assembly, heterooligomer composed of large and small subunits.

Its subcellular location is the cytoplasm. The catalysed reaction is Exonucleolytic cleavage in either 5'- to 3'- or 3'- to 5'-direction to yield nucleoside 5'-phosphates.. Its function is as follows. Bidirectionally degrades single-stranded DNA into large acid-insoluble oligonucleotides, which are then degraded further into small acid-soluble oligonucleotides. The protein is Exodeoxyribonuclease 7 large subunit of Yersinia enterocolitica serotype O:8 / biotype 1B (strain NCTC 13174 / 8081).